The chain runs to 345 residues: AA9 family lytic polysaccharide monooxygenase D (345 aa).

The signal sequence occupies residues 1-21 (MPSFTSKTLLAALAGAAAVNA). Cu(2+) is bound by residues His-22 and His-107. A disulfide bridge connects residues Cys-77 and Cys-200. Asn-160 is a glycosylation site (N-linked (GlcNAc...) asparagine). The O2 site is built by His-186 and Gln-195. Tyr-197 is a binding site for Cu(2+). The interval 315-345 (VQTSTRPISTRPQPTRCPGLGRRHLRKVARA) is disordered. A compositionally biased stretch (polar residues) spans 318–327 (STRPISTRPQ). Residues 335–345 (GRRHLRKVARA) show a composition bias toward basic residues.

This sequence belongs to the polysaccharide monooxygenase AA9 family. Requires Cu(2+) as cofactor.

The protein localises to the secreted. The enzyme catalyses [(1-&gt;4)-beta-D-glucosyl]n+m + reduced acceptor + O2 = 4-dehydro-beta-D-glucosyl-[(1-&gt;4)-beta-D-glucosyl]n-1 + [(1-&gt;4)-beta-D-glucosyl]m + acceptor + H2O.. Its function is as follows. Lytic polysaccharide monooxygenase (LPMO) that depolymerizes crystalline and amorphous polysaccharides via the oxidation of scissile alpha- or beta-(1-4)-glycosidic bonds, yielding C1 or C4 oxidation products. Catalysis by LPMOs requires the reduction of the active-site copper from Cu(II) to Cu(I) by a reducing agent and H(2)O(2) or O(2) as a cosubstrate. The protein is AA9 family lytic polysaccharide monooxygenase D of Podospora anserina (strain S / ATCC MYA-4624 / DSM 980 / FGSC 10383) (Pleurage anserina).